Consider the following 295-residue polypeptide: Acetylglutamate kinase (295 aa).

Residues 66-67 (GG), R88, and N193 each bind substrate.

The protein belongs to the acetylglutamate kinase family. ArgB subfamily.

The protein localises to the cytoplasm. The enzyme catalyses N-acetyl-L-glutamate + ATP = N-acetyl-L-glutamyl 5-phosphate + ADP. It functions in the pathway amino-acid biosynthesis; L-arginine biosynthesis; N(2)-acetyl-L-ornithine from L-glutamate: step 2/4. Catalyzes the ATP-dependent phosphorylation of N-acetyl-L-glutamate. The sequence is that of Acetylglutamate kinase from Sinorhizobium medicae (strain WSM419) (Ensifer medicae).